The sequence spans 65 residues: Small hydrophobic protein (65 aa).

Over 1 to 20 the chain is Intravirion; the sequence is MGNTSITIEFTSKFWPYFTL. The interaction with host BCAP31 stretch occupies residues 6 to 15; sequence ITIEFTSKFW. A helical; Signal-anchor for type II membrane protein transmembrane segment spans residues 21–44; the sequence is IHMILTLISLLIIITIMIAILNKL. The interval 38-43 is interaction with small-molecule inhibitor; it reads IAILNK. Residues 45-65 are Virion surface-facing; it reads SEHKTFCNNTLELGQMHQINT. N52 carries an N-linked (GlcNAc...) asparagine; by host glycan.

Belongs to the orthopneumovirus small hydrophobic protein family. Homopentamer forming a funnel-like pore. Interacts with glycoprotein G; this interaction occurs on the surface of virion particles and infected cells. Interacts with host BCAP31 (via C-terminus); this interaction is direct. In terms of processing, four species of SH have been detected in infected cell cytoplasm: a 7.5 kDa non-glycosylated form (SH0), a 13-15 kDa form that contains one or two N-linked carbohydrate side chains of the high-mannose type (SHg), a 21-30 kDa polylactosaminoglycan-modified form of the protein (SHp), and the isoform generated by alternative translational initiation. Of these different forms, SH0 is by far the most abundant protein detected during virus infection. Tyrosine phosphorylated.

The protein resides in the virion membrane. Its subcellular location is the host cell membrane. It is found in the host Golgi apparatus membrane. The protein localises to the host endoplasmic reticulum membrane. With respect to regulation, channel activity is inhibited by copper. Also inhibited by small-molecule pyronin B. Its function is as follows. Viroporin that forms a homopentameric ion channel displaying low ion selectivity. May play a role in virus morphogenesis and pathogenicity at various stages of the viral life cycle. Accumulates at the membrane of the Golgi apparatus in infected cells and may facilitate virus release by modifying the secretory pathway. May enhance host membrane permeability and disrupt cellular ion homeostasis, which can be sensed as damage-associated molecular patterns/danger signals, triggering NLRP3 inflammasome activation and inflammatory immune response. Also inhibits host TNFA-mediated signaling pathway and may delay apoptosis, allowing time for the virus to replicate. This is Small hydrophobic protein from Homo sapiens (Human).